The chain runs to 81 residues: Protein Vpu (81 aa).

Residues 1-7 lie on the Extracellular side of the membrane; it reads MQSLEIV. A helical membrane pass occupies residues 8–28; sequence AIVELVVAAIIAIVVWTIVFI. The Cytoplasmic segment spans residues 29–81; that stretch reads EYRKILRQRKIDRLIDRIREREEDNGNESEGDQEELSALVEMGHHAPWNVDDL. Residues 50 to 81 form a disordered region; the sequence is EEDNGNESEGDQEELSALVEMGHHAPWNVDDL. Over residues 53–63 the composition is skewed to acidic residues; that stretch reads NGNESEGDQEE. Ser-57 carries the phosphoserine; by host CK2 modification.

This sequence belongs to the HIV-1 VPU protein family. In terms of assembly, homopentamer. Interacts with host CD4 and BRTC; these interactions induce proteasomal degradation of CD4. Interacts with host BST2; this interaction leads to the degradation of host BST2. Interacts with host FBXW11. Interacts with host AP1M1; this interaction plays a role in the mistrafficking and subsequent degradation of host BST2. Interacts with host RANBP2; this interaction allows Vpu to down-regulate host BLM sumoylation. Phosphorylated by host CK2. This phosphorylation is necessary for interaction with human BTRC and degradation of CD4.

It is found in the host membrane. With respect to regulation, ion channel activity is inhibited by hexamethylene amiloride in vitro. Functionally, enhances virion budding by targeting host CD4 and Tetherin/BST2 to proteasome degradation. Degradation of CD4 prevents any unwanted premature interactions between viral Env and its host receptor CD4 in the endoplasmic reticulum. Degradation of antiretroviral protein Tetherin/BST2 is important for virion budding, as BST2 tethers new viral particles to the host cell membrane. Mechanistically, Vpu bridges either CD4 or BST2 to BTRC, a substrate recognition subunit of the Skp1/Cullin/F-box protein E3 ubiquitin ligase, induces their ubiquitination and subsequent proteasomal degradation. The alteration of the E3 ligase specificity by Vpu seems to promote the degradation of host IKBKB, leading to NF-kappa-B down-regulation and subsequent apoptosis. Acts as a viroporin that forms an oligomeric ion channel in membranes. Modulates the host DNA repair mechanisms to promote degradation of nuclear viral cDNA in cells that are already productively infected in order to suppress immune sensing and proviral hyper-integration (superinfection). Manipulates PML-NBs and modulates SUMOylation of host BLM protein thereby enhancing its DNA-end processing activity toward viral unintegrated linear DNA. Also inhibits RAD52-mediated homologous repair of viral cDNA, preventing the generation of dead-end circular forms of single copies of the long terminal repeat and permitting sustained nucleolytic attack. In Homo sapiens (Human), this protein is Protein Vpu.